Reading from the N-terminus, the 364-residue chain is tRNA 2-selenouridine synthase (364 aa).

A Rhodanese domain is found at 14–137 (LLADTPLIDV…LRQTAIQATW (124 aa)). C97 functions as the S-selanylcysteine intermediate in the catalytic mechanism.

The protein belongs to the SelU family. In terms of assembly, monomer.

The enzyme catalyses 5-methylaminomethyl-2-thiouridine(34) in tRNA + selenophosphate + (2E)-geranyl diphosphate + H2O + H(+) = 5-methylaminomethyl-2-selenouridine(34) in tRNA + (2E)-thiogeraniol + phosphate + diphosphate. It carries out the reaction 5-methylaminomethyl-2-thiouridine(34) in tRNA + (2E)-geranyl diphosphate = 5-methylaminomethyl-S-(2E)-geranyl-thiouridine(34) in tRNA + diphosphate. The catalysed reaction is 5-methylaminomethyl-S-(2E)-geranyl-thiouridine(34) in tRNA + selenophosphate + H(+) = 5-methylaminomethyl-2-(Se-phospho)selenouridine(34) in tRNA + (2E)-thiogeraniol. It catalyses the reaction 5-methylaminomethyl-2-(Se-phospho)selenouridine(34) in tRNA + H2O = 5-methylaminomethyl-2-selenouridine(34) in tRNA + phosphate. Functionally, involved in the post-transcriptional modification of the uridine at the wobble position (U34) of tRNA(Lys), tRNA(Glu) and tRNA(Gln). Catalyzes the conversion of 2-thiouridine (S2U-RNA) to 2-selenouridine (Se2U-RNA). Acts in a two-step process involving geranylation of 2-thiouridine (S2U) to S-geranyl-2-thiouridine (geS2U) and subsequent selenation of the latter derivative to 2-selenouridine (Se2U) in the tRNA chain. This chain is tRNA 2-selenouridine synthase, found in Salmonella choleraesuis (strain SC-B67).